Consider the following 464-residue polypeptide: Tyrosine--tRNA ligase, mitochondrial (464 aa).

Residue Tyr61 coordinates L-tyrosine. Residue Asp65 coordinates ATP. A 'HIGH' region motif is present at residues 66–75 (PTADSLHVGN). L-tyrosine contacts are provided by Asp105, Tyr209, Gln213, Asp216, and Gln235. The short motif at 270 to 274 (KFGKS) is the 'KMSKS' region element. Residue Lys273 coordinates ATP.

Belongs to the class-I aminoacyl-tRNA synthetase family. Homodimer.

The protein resides in the mitochondrion matrix. The enzyme catalyses tRNA(Tyr) + L-tyrosine + ATP = L-tyrosyl-tRNA(Tyr) + AMP + diphosphate + H(+). Catalyzes the attachment of tyrosine to tRNA(Tyr) in a two-step reaction: tyrosine is first activated by ATP to form Tyr-AMP and then transferred to the acceptor end of tRNA(Tyr). The sequence is that of Tyrosine--tRNA ligase, mitochondrial from Drosophila melanogaster (Fruit fly).